A 91-amino-acid polypeptide reads, in one-letter code: Salivary lectin pathway inhibitor (91 aa).

The N-terminal stretch at 1–21 is a signal peptide; sequence MGLTETTLVLVSLAFFASAVA. Residues asparagine 26 and asparagine 87 are each glycosylated (N-linked (GlcNAc...) asparagine).

This sequence belongs to the salp14 family. In terms of processing, glycosylated; deglycosylation largely abrogates the complement inhibitory effect. In terms of tissue distribution, nymph salivary gland (at protein level). Saliva (at protein level). Not detected in midgut.

It is found in the secreted. Inhibits the lectin pathway of complement system activation in the host by reducing binding of mannose-binding lectin and L-ficolin to their ligands. Does not affect the classical and alternative pathways of complement system activation in the host. Its function is as follows. (Microbial infection) Protects Borrelia garinii (strain A87S) from host complement-mediated killing by preventing deposition of host C5b-9 membrane attack complexes on the surface of spirochetes. Inhibits phagocytosis of B.garinii (strain A87S) by human neutrophils. Impairs Borrelia-induced complement-mediated chemotaxis of human polymorphonuclear leukocytes. Functionally, (Microbial infection) Protects Borrelia burgdorferi (strain N40), which is resistant to normal human serum, from Borrelia-opsonizing antibody-mediated complement-dependent killing. The chain is Salivary lectin pathway inhibitor from Ixodes scapularis (Black-legged tick).